A 175-amino-acid chain; its full sequence is MGRTLESKQQIVEELKKLLGEAEMALVLDYQGLSIKEMSDLRTRLQASNGVCKVTKNTLMRRAIDGDSVWSSLDSLLNGTNAFVLIKGDVGGAVKAVQSFQKETKKSETKGGLFEGKLLSQDEIKAIGELPSKEVLMAQIAGAINAVTTKVAVGVNEVPSGLARALKQHADSGES.

This sequence belongs to the universal ribosomal protein uL10 family. Part of the ribosomal stalk of the 50S ribosomal subunit. The N-terminus interacts with L11 and the large rRNA to form the base of the stalk. The C-terminus forms an elongated spine to which L12 dimers bind in a sequential fashion forming a multimeric L10(L12)X complex.

Its function is as follows. Forms part of the ribosomal stalk, playing a central role in the interaction of the ribosome with GTP-bound translation factors. The chain is Large ribosomal subunit protein uL10 from Synechococcus sp. (strain CC9311).